A 96-amino-acid polypeptide reads, in one-letter code: Citrate lyase acyl carrier protein (96 aa).

Residue S14 is modified to O-(phosphoribosyl dephospho-coenzyme A)serine.

Belongs to the CitD family. In terms of assembly, oligomer with a subunit composition of (alpha,beta,gamma)6.

The protein resides in the cytoplasm. Functionally, covalent carrier of the coenzyme of citrate lyase. The sequence is that of Citrate lyase acyl carrier protein from Lactococcus lactis subsp. lactis (strain IL1403) (Streptococcus lactis).